We begin with the raw amino-acid sequence, 292 residues long: uncharacterized protein (292 aa).

A helical membrane pass occupies residues 13 to 35 (LFILFIIVVCIYLLPRVAINAFY).

The protein belongs to the serine esterase family.

It is found in the membrane. This is an uncharacterized protein from Salmonella typhi.